The sequence spans 330 residues: Aspartate--ammonia ligase (330 aa).

Belongs to the class-II aminoacyl-tRNA synthetase family. AsnA subfamily.

The protein localises to the cytoplasm. It catalyses the reaction L-aspartate + NH4(+) + ATP = L-asparagine + AMP + diphosphate + H(+). It functions in the pathway amino-acid biosynthesis; L-asparagine biosynthesis; L-asparagine from L-aspartate (ammonia route): step 1/1. In Streptococcus equi subsp. equi (strain 4047), this protein is Aspartate--ammonia ligase.